The following is a 626-amino-acid chain: Glutamate--cysteine ligase (626 aa).

It belongs to the glutamate--cysteine ligase type 3 family. In terms of assembly, monomer.

It carries out the reaction L-cysteine + L-glutamate + ATP = gamma-L-glutamyl-L-cysteine + ADP + phosphate + H(+). It functions in the pathway sulfur metabolism; glutathione biosynthesis; glutathione from L-cysteine and L-glutamate: step 1/2. Functionally, an essential enzyme in glutathione (L-gamma-glutamyl-L-cysteinylglycine, GSH) biosynthesis, GSH is essential for growth and differentiation to prespore stage. Catalyzes the condensation of glutamate to cysteine. The protein is Glutamate--cysteine ligase (gcsA) of Dictyostelium discoideum (Social amoeba).